The following is a 405-amino-acid chain: Phosphoglycerate kinase (405 aa).

Substrate-binding positions include 24–26, Arg40, 63–66, Arg122, and Arg162; these read DFN and HLGR. Residues Lys212, Glu331, and 361–364 each bind ATP; that span reads GGDS.

The protein belongs to the phosphoglycerate kinase family. Monomer.

The protein resides in the cytoplasm. It carries out the reaction (2R)-3-phosphoglycerate + ATP = (2R)-3-phospho-glyceroyl phosphate + ADP. Its pathway is carbohydrate degradation; glycolysis; pyruvate from D-glyceraldehyde 3-phosphate: step 2/5. The sequence is that of Phosphoglycerate kinase from Corynebacterium efficiens (strain DSM 44549 / YS-314 / AJ 12310 / JCM 11189 / NBRC 100395).